The primary structure comprises 509 residues: Maturase K (509 aa).

It belongs to the intron maturase 2 family. MatK subfamily.

Its subcellular location is the plastid. It localises to the chloroplast. Usually encoded in the trnK tRNA gene intron. Probably assists in splicing its own and other chloroplast group II introns. This chain is Maturase K, found in Nicotiana glutinosa (Tobacco).